Reading from the N-terminus, the 376-residue chain is Queuine tRNA-ribosyltransferase (376 aa).

Aspartate 92 serves as the catalytic Proton acceptor. Residues 92 to 96, aspartate 146, glutamine 190, and glycine 217 contribute to the substrate site; that span reads DSGGF. Residues 248–254 are RNA binding; the sequence is GVGRPED. Residue aspartate 267 is the Nucleophile of the active site. Positions 272-276 are RNA binding; important for wobble base 34 recognition; it reads TRNAR. Positions 305, 307, 310, and 337 each coordinate Zn(2+).

Belongs to the queuine tRNA-ribosyltransferase family. In terms of assembly, homodimer. Within each dimer, one monomer is responsible for RNA recognition and catalysis, while the other monomer binds to the replacement base PreQ1. Requires Zn(2+) as cofactor.

It catalyses the reaction 7-aminomethyl-7-carbaguanine + guanosine(34) in tRNA = 7-aminomethyl-7-carbaguanosine(34) in tRNA + guanine. The protein operates within tRNA modification; tRNA-queuosine biosynthesis. In terms of biological role, catalyzes the base-exchange of a guanine (G) residue with the queuine precursor 7-aminomethyl-7-deazaguanine (PreQ1) at position 34 (anticodon wobble position) in tRNAs with GU(N) anticodons (tRNA-Asp, -Asn, -His and -Tyr). Catalysis occurs through a double-displacement mechanism. The nucleophile active site attacks the C1' of nucleotide 34 to detach the guanine base from the RNA, forming a covalent enzyme-RNA intermediate. The proton acceptor active site deprotonates the incoming PreQ1, allowing a nucleophilic attack on the C1' of the ribose to form the product. After dissociation, two additional enzymatic reactions on the tRNA convert PreQ1 to queuine (Q), resulting in the hypermodified nucleoside queuosine (7-(((4,5-cis-dihydroxy-2-cyclopenten-1-yl)amino)methyl)-7-deazaguanosine). The sequence is that of Queuine tRNA-ribosyltransferase from Stenotrophomonas maltophilia (strain K279a).